The chain runs to 490 residues: Serine/threonine-protein kinase PBL35 (490 aa).

Disordered regions lie at residues 1 to 39 and 80 to 103; these read MGFDSVKVMENWQSKTSNENEKKKKKRRRKKNNNVRNSE and SAIVQSNDQPVGPVSSTTTTSNAE. The stretch at 14–39 forms a coiled coil; it reads SKTSNENEKKKKKRRRKKNNNVRNSE. The segment covering 23-33 has biased composition (basic residues); that stretch reads KKKKRRRKKNN. Over residues 94-103 the composition is skewed to low complexity; it reads SSTTTTSNAE. A Protein kinase domain is found at 136–422; the sequence is FRPESLLGEG…VEVLKPLPHL (287 aa). Residues 142–150 and K174 each bind ATP; that span reads LGEGGFGCV. Residue Y219 is modified to Phosphotyrosine. Residue D269 is the Proton acceptor of the active site. A phosphoserine mark is found at S273 and S303. 2 positions are modified to phosphothreonine: T304 and T309. Position 317 is a phosphotyrosine (Y317). A disordered region spans residues 442-490; sequence AGSGSGSGRGFGSRNGQPVFRTLSSPHGQAGSSPYRHQIPSPKPKGATT. Residues 444–454 are compositionally biased toward gly residues; that stretch reads SGSGSGRGFGS. The segment covering 463 to 473 has biased composition (polar residues); that stretch reads TLSSPHGQAGS.

Belongs to the protein kinase superfamily. Ser/Thr protein kinase family. In terms of assembly, interacts with SD129. Phosphorylated by SD129 in response to the pathogen-associated molecular pattern (PAMP) 3-OH-C10:0, a medium-chain 3-hydroxy fatty acid.

It localises to the cell membrane. The enzyme catalyses L-seryl-[protein] + ATP = O-phospho-L-seryl-[protein] + ADP + H(+). The catalysed reaction is L-threonyl-[protein] + ATP = O-phospho-L-threonyl-[protein] + ADP + H(+). Involved in chitin-triggered immune signaling and is required for reactive oxygen species (ROS) production. Acts downstream of SD129 in defense signaling triggered by the pathogen-associated molecular pattern (PAMP) 3-OH-C10:0, a medium-chain 3-hydroxy fatty acid. This Arabidopsis thaliana (Mouse-ear cress) protein is Serine/threonine-protein kinase PBL35.